Consider the following 276-residue polypeptide: Diaminopimelate epimerase (276 aa).

Asn-13, Gln-46, and Asn-66 together coordinate substrate. Cys-75 serves as the catalytic Proton donor. Substrate-binding positions include 76–77, Asn-159, Asn-192, and 210–211; these read GN and ER. Residue Cys-219 is the Proton acceptor of the active site. 220–221 contacts substrate; that stretch reads GS.

It belongs to the diaminopimelate epimerase family. As to quaternary structure, homodimer.

The protein resides in the cytoplasm. It catalyses the reaction (2S,6S)-2,6-diaminopimelate = meso-2,6-diaminopimelate. It participates in amino-acid biosynthesis; L-lysine biosynthesis via DAP pathway; DL-2,6-diaminopimelate from LL-2,6-diaminopimelate: step 1/1. Its function is as follows. Catalyzes the stereoinversion of LL-2,6-diaminopimelate (L,L-DAP) to meso-diaminopimelate (meso-DAP), a precursor of L-lysine and an essential component of the bacterial peptidoglycan. The polypeptide is Diaminopimelate epimerase (Vibrio parahaemolyticus serotype O3:K6 (strain RIMD 2210633)).